A 301-amino-acid chain; its full sequence is Sulfate adenylyltransferase subunit 2 (301 aa).

It belongs to the PAPS reductase family. CysD subfamily. Heterodimer composed of CysD, the smaller subunit, and CysN.

The enzyme catalyses sulfate + ATP + H(+) = adenosine 5'-phosphosulfate + diphosphate. The protein operates within sulfur metabolism; hydrogen sulfide biosynthesis; sulfite from sulfate: step 1/3. With CysN forms the ATP sulfurylase (ATPS) that catalyzes the adenylation of sulfate producing adenosine 5'-phosphosulfate (APS) and diphosphate, the first enzymatic step in sulfur assimilation pathway. APS synthesis involves the formation of a high-energy phosphoric-sulfuric acid anhydride bond driven by GTP hydrolysis by CysN coupled to ATP hydrolysis by CysD. The sequence is that of Sulfate adenylyltransferase subunit 2 from Trichlorobacter lovleyi (strain ATCC BAA-1151 / DSM 17278 / SZ) (Geobacter lovleyi).